Reading from the N-terminus, the 126-residue chain is MAEKLEVYKCELCGNIVEVLHGGAGELVCCGKPMNLLNENTVDAAKEKHVPVIEKTNDGIIVKVGSVAHPMEEKHFIQWIELIANGKAYRQHLSPGDKPEACFPLITGPLKVREYCNLHGLWSSEG.

Fe cation is bound by residues Cys10, Cys13, Cys29, Cys30, His49, His69, His75, Cys116, and His119.

Belongs to the desulfoferrodoxin family. As to quaternary structure, homodimer. Requires Fe(3+) as cofactor. Cu(2+) is required as a cofactor.

It catalyses the reaction reduced [rubredoxin] + superoxide + 2 H(+) = oxidized [rubredoxin] + H2O2. Catalyzes the one-electron reduction of superoxide anion radical to hydrogen peroxide at a nonheme ferrous iron center. Plays a fundamental role in case of oxidative stress via its superoxide detoxification activity. This chain is Desulfoferrodoxin (dfx), found in Syntrophotalea carbinolica (strain DSM 2380 / NBRC 103641 / GraBd1) (Pelobacter carbinolicus).